We begin with the raw amino-acid sequence, 115 residues long: Ribonuclease P protein component (115 aa).

This sequence belongs to the RnpA family. As to quaternary structure, consists of a catalytic RNA component (M1 or rnpB) and a protein subunit.

It carries out the reaction Endonucleolytic cleavage of RNA, removing 5'-extranucleotides from tRNA precursor.. In terms of biological role, RNaseP catalyzes the removal of the 5'-leader sequence from pre-tRNA to produce the mature 5'-terminus. It can also cleave other RNA substrates such as 4.5S RNA. The protein component plays an auxiliary but essential role in vivo by binding to the 5'-leader sequence and broadening the substrate specificity of the ribozyme. This is Ribonuclease P protein component from Bacillus cereus (strain 03BB102).